Consider the following 336-residue polypeptide: Anthranilate phosphoribosyltransferase (336 aa).

Residues G83, 86–87, T91, 93–96, 111–119, and S123 contribute to the 5-phospho-alpha-D-ribose 1-diphosphate site; these read GD, NIST, and KHGNRSVSS. Residue G83 participates in anthranilate binding. S95 lines the Mg(2+) pocket. N114 is a binding site for anthranilate. An anthranilate-binding site is contributed by R169. D227 and E228 together coordinate Mg(2+).

The protein belongs to the anthranilate phosphoribosyltransferase family. Homodimer. It depends on Mg(2+) as a cofactor.

The catalysed reaction is N-(5-phospho-beta-D-ribosyl)anthranilate + diphosphate = 5-phospho-alpha-D-ribose 1-diphosphate + anthranilate. The protein operates within amino-acid biosynthesis; L-tryptophan biosynthesis; L-tryptophan from chorismate: step 2/5. In terms of biological role, catalyzes the transfer of the phosphoribosyl group of 5-phosphorylribose-1-pyrophosphate (PRPP) to anthranilate to yield N-(5'-phosphoribosyl)-anthranilate (PRA). The polypeptide is Anthranilate phosphoribosyltransferase (Vibrio campbellii (strain ATCC BAA-1116)).